Consider the following 256-residue polypeptide: Thiazole synthase (256 aa).

K98 functions as the Schiff-base intermediate with DXP in the catalytic mechanism. Residues G159, 185–186 (AG), and 207–208 (NT) contribute to the 1-deoxy-D-xylulose 5-phosphate site.

Belongs to the ThiG family. Homotetramer. Forms heterodimers with either ThiH or ThiS.

It is found in the cytoplasm. It carries out the reaction [ThiS sulfur-carrier protein]-C-terminal-Gly-aminoethanethioate + 2-iminoacetate + 1-deoxy-D-xylulose 5-phosphate = [ThiS sulfur-carrier protein]-C-terminal Gly-Gly + 2-[(2R,5Z)-2-carboxy-4-methylthiazol-5(2H)-ylidene]ethyl phosphate + 2 H2O + H(+). It functions in the pathway cofactor biosynthesis; thiamine diphosphate biosynthesis. In terms of biological role, catalyzes the rearrangement of 1-deoxy-D-xylulose 5-phosphate (DXP) to produce the thiazole phosphate moiety of thiamine. Sulfur is provided by the thiocarboxylate moiety of the carrier protein ThiS. In vitro, sulfur can be provided by H(2)S. The protein is Thiazole synthase of Aliivibrio salmonicida (strain LFI1238) (Vibrio salmonicida (strain LFI1238)).